A 423-amino-acid chain; its full sequence is Mannitol-1-phosphate 5-dehydrogenase (423 aa).

The Zn(2+) site is built by C40, H69, and E70.

This sequence belongs to the zinc-containing alcohol dehydrogenase family. Requires Zn(2+) as cofactor.

The enzyme catalyses D-mannitol 1-phosphate + NAD(+) = beta-D-fructose 6-phosphate + NADH + H(+). Seems to be involved in mannitol utilization. Complements an E.coli mtlD deletion mutant. In Aliivibrio fischeri (strain ATCC 700601 / ES114) (Vibrio fischeri), this protein is Mannitol-1-phosphate 5-dehydrogenase.